Here is a 188-residue protein sequence, read N- to C-terminus: Large ribosomal subunit protein eL18 (188 aa).

K119 participates in a covalent cross-link: Glycyl lysine isopeptide (Lys-Gly) (interchain with G-Cter in SUMO2). S130 carries the post-translational modification Phosphoserine. The disordered stretch occupies residues 150-188 (RHFGKAPRTPHSHTKPYVRSKGRKFERARGRWASRGYKN). Composition is skewed to basic residues over residues 151 to 171 (HFGK…RSKG) and 179 to 188 (GRWASRGYKN). At T158 the chain carries Phosphothreonine. K164 participates in a covalent cross-link: Glycyl lysine isopeptide (Lys-Gly) (interchain with G-Cter in SUMO2).

Belongs to the eukaryotic ribosomal protein eL18 family. In terms of assembly, component of the large ribosomal subunit.

It localises to the cytoplasm. Its subcellular location is the cytosol. The protein resides in the rough endoplasmic reticulum. Its function is as follows. Component of the large ribosomal subunit. The ribosome is a large ribonucleoprotein complex responsible for the synthesis of proteins in the cell. This Oryctolagus cuniculus (Rabbit) protein is Large ribosomal subunit protein eL18 (RPL18).